Consider the following 309-residue polypeptide: Probable manganese-dependent inorganic pyrophosphatase (309 aa).

6 residues coordinate Mn(2+): His9, Asp13, Asp15, Asp75, His97, and Asp149.

Belongs to the PPase class C family. The cofactor is Mn(2+).

It localises to the cytoplasm. It catalyses the reaction diphosphate + H2O = 2 phosphate + H(+). The chain is Probable manganese-dependent inorganic pyrophosphatase from Bacillus cereus (strain AH187).